A 409-amino-acid chain; its full sequence is Phospho-N-acetylmuramoyl-pentapeptide-transferase (409 aa).

The next 10 membrane-spanning stretches (helical) occupy residues 23-43 (YITF…TIFG), 73-93 (TPTM…LLLA), 95-115 (LNNI…AIGF), 132-152 (GIFK…TLYF), 214-234 (YAWL…SNGA), 247-267 (TSAI…NVIF), 279-299 (SGEM…FLWY), 305-325 (AVFM…VLAI), 331-351 (MLIP…VLQV), and 386-406 (KIVT…IVTL).

It belongs to the glycosyltransferase 4 family. MraY subfamily. Mg(2+) is required as a cofactor.

It is found in the cell inner membrane. The enzyme catalyses UDP-N-acetyl-alpha-D-muramoyl-L-alanyl-gamma-D-glutamyl-meso-2,6-diaminopimeloyl-D-alanyl-D-alanine + di-trans,octa-cis-undecaprenyl phosphate = di-trans,octa-cis-undecaprenyl diphospho-N-acetyl-alpha-D-muramoyl-L-alanyl-D-glutamyl-meso-2,6-diaminopimeloyl-D-alanyl-D-alanine + UMP. The protein operates within cell wall biogenesis; peptidoglycan biosynthesis. In terms of biological role, catalyzes the initial step of the lipid cycle reactions in the biosynthesis of the cell wall peptidoglycan: transfers peptidoglycan precursor phospho-MurNAc-pentapeptide from UDP-MurNAc-pentapeptide onto the lipid carrier undecaprenyl phosphate, yielding undecaprenyl-pyrophosphoryl-MurNAc-pentapeptide, known as lipid I. This is Phospho-N-acetylmuramoyl-pentapeptide-transferase from Flavobacterium psychrophilum (strain ATCC 49511 / DSM 21280 / CIP 103535 / JIP02/86).